Reading from the N-terminus, the 402-residue chain is MIPPSSPREDGVDGLPKEAVGAEQPPSPASTSSQESKLQKLKRSLSFKTKSLRSKSADNFFQRTNSEDMKLQAHMVAEISPSSSPLPAPGSLTSTPARAGLHPGGKAHAFQEYIFKKPTFCDVCNHMIVGTNAKHGLRCKACKMSIHHKCTDGLAPQRCMGKLPKGFRRYYSSPLLIHEQFGCIKEVMPIACGNKVDPVYETLRFGTSLAQRTKKGSSGSGSDSPHRTSTSDLVEVPEEANGPGGGYDLRKRSNSVFTYPENGTDDFRDPAKNINHQGSLSKDPLQMNTYVALYKFVPQENEDLEMRPGDIITLLEDSNEDWWKGKIQDRIGFFPANFVQRLQQNEKIFRCVRTFIGCKEQGQITLKENQICVSSEEEQDGFIRVLSGKKKGLIPLDVLENI.

A disordered region spans residues 1–47; it reads MIPPSSPREDGVDGLPKEAVGAEQPPSPASTSSQESKLQKLKRSLSF. The Phorbol-ester/DAG-type zinc-finger motif lies at 107–159; it reads AHAFQEYIFKKPTFCDVCNHMIVGTNAKHGLRCKACKMSIHHKCTDGLAPQRC. The tract at residues 211-247 is disordered; sequence QRTKKGSSGSGSDSPHRTSTSDLVEVPEEANGPGGGY. SH3 domains are found at residues 285–344 and 347–402; these read LQMN…RLQQ and KIFR…LENI.

In terms of assembly, interacts (via SH3 domains) with CACNA1S. Interacts with CACNA1H. Interacts with CACNA1C.

Its subcellular location is the cytoplasm. It localises to the cytosol. The protein localises to the cell membrane. It is found in the sarcolemma. Promotes expression of the ion channel CACNA1H at the cell membrane, and thereby contributes to the regulation of channel activity. Plays a minor and redundant role in promoting the expression of calcium channel CACNA1S at the cell membrane, and thereby contributes to increased channel activity. Slows down the inactivation rate of the calcium channel CACNA1C. The protein is SH3 and cysteine-rich domain-containing protein (STAC) of Homo sapiens (Human).